Reading from the N-terminus, the 145-residue chain is MKVILIKDTKDGKANTIIDVSPGYATNFLFKNKLAEPLNSRTEKLLVKRKQQIEIEKQEKQEQIAKLKIEIEKLVLWFKLKGNKESVHGAITAKKIKKELEIKGIFVDKQAIQTSGISTFGTSFVDIKLSSQTIAKLKINITKDE.

Belongs to the bacterial ribosomal protein bL9 family.

Functionally, binds to the 23S rRNA. The chain is Large ribosomal subunit protein bL9 from Mesomycoplasma hyopneumoniae (strain 7448) (Mycoplasma hyopneumoniae).